A 304-amino-acid polypeptide reads, in one-letter code: Recombination-associated protein RdgC (304 aa).

It belongs to the RdgC family.

The protein resides in the cytoplasm. It localises to the nucleoid. Its function is as follows. May be involved in recombination. The protein is Recombination-associated protein RdgC of Dechloromonas aromatica (strain RCB).